The following is a 178-amino-acid chain: Putative adenylate kinase (178 aa).

Glycine 10, glycine 12, lysine 13, serine 14, and serine 15 together coordinate ATP. The tract at residues 29-50 is NMP; it reads TVVELAEKHGCIIDEEDGEIVI. Residues 94–104 are LID; that stretch reads GRNWSEEKLLE. ATP is bound at residue arginine 95.

The protein belongs to the adenylate kinase family. AK6 subfamily. As to quaternary structure, interacts with uS11. Not a structural component of 40S pre-ribosomes, but transiently interacts with them by binding to uS11.

It catalyses the reaction AMP + ATP = 2 ADP. It carries out the reaction ATP + H2O = ADP + phosphate + H(+). Broad-specificity nucleoside monophosphate (NMP) kinase that catalyzes the reversible transfer of the terminal phosphate group between nucleoside triphosphates and monophosphates. Also has ATPase activity. Involved in the late maturation steps of the 30S ribosomal particles, specifically 16S rRNA maturation. While NMP activity is not required for ribosome maturation, ATPase activity is. Associates transiently with small ribosomal subunit protein uS11. ATP hydrolysis breaks the interaction with uS11. May temporarily remove uS11 from the ribosome to enable a conformational change of the ribosomal RNA that is needed for the final maturation step of the small ribosomal subunit. The polypeptide is Putative adenylate kinase (Archaeoglobus fulgidus (strain ATCC 49558 / DSM 4304 / JCM 9628 / NBRC 100126 / VC-16)).